We begin with the raw amino-acid sequence, 180 residues long: Shikimate kinase (180 aa).

Gly14 to Thr19 contacts ATP. Mg(2+) is bound at residue Ser18. Asp36, Arg60, and Gly82 together coordinate substrate. Arg120 serves as a coordination point for ATP. Arg139 contacts substrate.

This sequence belongs to the shikimate kinase family. Monomer. Mg(2+) is required as a cofactor.

The protein resides in the cytoplasm. It catalyses the reaction shikimate + ATP = 3-phosphoshikimate + ADP + H(+). The protein operates within metabolic intermediate biosynthesis; chorismate biosynthesis; chorismate from D-erythrose 4-phosphate and phosphoenolpyruvate: step 5/7. Catalyzes the specific phosphorylation of the 3-hydroxyl group of shikimic acid using ATP as a cosubstrate. The sequence is that of Shikimate kinase from Chromohalobacter salexigens (strain ATCC BAA-138 / DSM 3043 / CIP 106854 / NCIMB 13768 / 1H11).